Reading from the N-terminus, the 321-residue chain is Glucokinase (321 aa).

8 to 13 (GDVGGT) contacts ATP.

Belongs to the bacterial glucokinase family.

Its subcellular location is the cytoplasm. The enzyme catalyses D-glucose + ATP = D-glucose 6-phosphate + ADP + H(+). In Erwinia tasmaniensis (strain DSM 17950 / CFBP 7177 / CIP 109463 / NCPPB 4357 / Et1/99), this protein is Glucokinase.